The primary structure comprises 153 residues: Transcriptional repressor NrdR (153 aa).

A zinc finger spans residues 3–34 (CPFCNNISTNVKDSRSIEDDMLIRRRRVCPVC). Residues 49 to 139 (LMVIKKNGGL…VYMNFKNIND (91 aa)) enclose the ATP-cone domain.

It belongs to the NrdR family. It depends on Zn(2+) as a cofactor.

Its function is as follows. Negatively regulates transcription of bacterial ribonucleotide reductase nrd genes and operons by binding to NrdR-boxes. The sequence is that of Transcriptional repressor NrdR from Ehrlichia ruminantium (strain Gardel).